The primary structure comprises 331 residues: ADP-L-glycero-D-manno-heptose-6-epimerase (331 aa).

NADP(+)-binding positions include 11-12 (FI), 32-33 (DN), Lys-39, Lys-54, 75-79 (LGACT), and Asn-92. Tyr-139 acts as the Proton acceptor in catalysis. An NADP(+)-binding site is contributed by Lys-143. A substrate-binding site is contributed by Asn-168. NADP(+) is bound by residues Val-169 and Lys-177. The Proton acceptor role is filled by Lys-177. Residues Arg-179, Gln-186, 200–203 (FGEH), His-213, and Tyr-292 contribute to the substrate site.

It belongs to the NAD(P)-dependent epimerase/dehydratase family. HldD subfamily. In terms of assembly, homopentamer. NADP(+) is required as a cofactor.

The enzyme catalyses ADP-D-glycero-beta-D-manno-heptose = ADP-L-glycero-beta-D-manno-heptose. The protein operates within nucleotide-sugar biosynthesis; ADP-L-glycero-beta-D-manno-heptose biosynthesis; ADP-L-glycero-beta-D-manno-heptose from D-glycero-beta-D-manno-heptose 7-phosphate: step 4/4. Functionally, catalyzes the interconversion between ADP-D-glycero-beta-D-manno-heptose and ADP-L-glycero-beta-D-manno-heptose via an epimerization at carbon 6 of the heptose. The protein is ADP-L-glycero-D-manno-heptose-6-epimerase of Cupriavidus pinatubonensis (strain JMP 134 / LMG 1197) (Cupriavidus necator (strain JMP 134)).